Here is a 212-residue protein sequence, read N- to C-terminus: Uracil phosphoribosyltransferase (212 aa).

5-phospho-alpha-D-ribose 1-diphosphate-binding positions include Arg-78, Arg-103, and Asp-130–Ser-138. Uracil-binding positions include Ile-193 and Gly-198–Ala-200. Asp-199 is a binding site for 5-phospho-alpha-D-ribose 1-diphosphate.

It belongs to the UPRTase family. It depends on Mg(2+) as a cofactor.

The enzyme catalyses UMP + diphosphate = 5-phospho-alpha-D-ribose 1-diphosphate + uracil. The protein operates within pyrimidine metabolism; UMP biosynthesis via salvage pathway; UMP from uracil: step 1/1. Its activity is regulated as follows. Allosterically activated by GTP. In terms of biological role, catalyzes the conversion of uracil and 5-phospho-alpha-D-ribose 1-diphosphate (PRPP) to UMP and diphosphate. This is Uracil phosphoribosyltransferase from Pseudomonas putida (strain ATCC 700007 / DSM 6899 / JCM 31910 / BCRC 17059 / LMG 24140 / F1).